We begin with the raw amino-acid sequence, 340 residues long: DNA-directed RNA polymerase subunit alpha (340 aa).

The interval 1 to 236 (MLSLSKNWNT…EQLQLFIAFE (236 aa)) is alpha N-terminal domain (alpha-NTD). The tract at residues 251–340 (FSPYLLKRVD…LSKRYEDSYN (90 aa)) is alpha C-terminal domain (alpha-CTD).

Belongs to the RNA polymerase alpha chain family. In terms of assembly, homodimer. The RNAP catalytic core consists of 2 alpha, 1 beta, 1 beta' and 1 omega subunit. When a sigma factor is associated with the core the holoenzyme is formed, which can initiate transcription.

It carries out the reaction RNA(n) + a ribonucleoside 5'-triphosphate = RNA(n+1) + diphosphate. In terms of biological role, DNA-dependent RNA polymerase catalyzes the transcription of DNA into RNA using the four ribonucleoside triphosphates as substrates. The sequence is that of DNA-directed RNA polymerase subunit alpha from Rickettsia prowazekii (strain Madrid E).